The chain runs to 313 residues: MGVKSFVEGGIASVIAGCSTHPLDLIKVRLQLHGEAPSTTTVTLLRPALAFPNSSPAAFLETTSSVPKVGPISLGINIVKSEGAAALFSGVSATLLRQTLYSTTRMGLYEVLKNKWTDPESGKLNLSRKIGAGLVAGGIGAAVGNPADVAMVRMQADGRLPLAQRRNYAGVGDAIRSMVKGEGVTSLWRGSALTINRAMIVTAAQLASYDQFKEGILENGVMNDGLGTHVVASFAAGFVASVASNPVDVIKTRVMNMKVGAYDGAWDCAVKTVKAEGAMALYKGFVPTVCRQGPFTVVLFVTLEQVRKLLRDF.

Solcar repeat units lie at residues Lys4 to Lys115, Leu124 to Gly215, and Asp224 to Leu309. Helical transmembrane passes span Phe6–Ile26, Ala84–Thr104, Ile130–Ala150, Arg189–Tyr209, Val230–Ile250, and Tyr282–Thr302.

It belongs to the mitochondrial carrier (TC 2.A.29) family. Expressed in roots, leaves, stems and flowers.

The protein localises to the mitochondrion inner membrane. Its function is as follows. PUMPS are mitochondrial transporter proteins that create proton leaks across the inner mitochondrial membrane, thus uncoupling oxidative phosphorylation. This leads to a decrease in the efficiency of oxidative phosphorylation and an increase in heat production. May be involved in protecting plant cells against oxidative stress damage. Recombinant PUMP4, reconstituted into liposomes, transports a wide range of dicarboxylic acids including malate, oxaloacetate and succinate as well as phosphate, sulfate and thiosulfate. However, it is unknown if these transports are of any biological significance in vivo. The chain is Mitochondrial uncoupling protein 4 (PUMP4) from Arabidopsis thaliana (Mouse-ear cress).